A 332-amino-acid chain; its full sequence is Adenosine receptor A2b (332 aa).

Topologically, residues 1–8 (MQLETQDA) are extracellular. Residues 9–33 (LYVALELAIAALSVAGNVLVCAAVG) form a helical membrane-spanning segment. Topologically, residues 34–43 (TSSALQTPTN) are cytoplasmic. Residues 44 to 67 (YFLVSLAAADVAVGLFAIPFAITI) traverse the membrane as a helical segment. Residues 68–78 (SLGFCTDFHSC) are Extracellular-facing. An intrachain disulfide couples C78 to C170. A helical transmembrane segment spans residues 79–101 (LFLACFVLVLTQSSIFSLLAVAV). The Cytoplasmic portion of the chain corresponds to 102-121 (DRYLAIRVPLRYKSLVTGTR). The helical transmembrane segment at 122 to 144 (ARGVIAVLWVLAFGIGLTPFLGW) threads the bilayer. Over 145–177 (NSKDSATNCTEPWDGTTNESCCLVKCLFENVVP) the chain is Extracellular. Residues N152 and N162 are each glycosylated (N-linked (GlcNAc...) asparagine). E173 contributes to the adenosine binding site. A helical membrane pass occupies residues 178–202 (MSYMVYFNFFGCVLPPLLIMLVIYI). Over 203-234 (KIFMVACKQLQRTELVDHSRTVIQREIHAAKS) the chain is Cytoplasmic. A helical membrane pass occupies residues 235-258 (LAMIVGIFALCWLPVHAINCVTLF). N253 serves as a coordination point for adenosine. Residues 259 to 266 (QPARAKDK) are Extracellular-facing. Residues 267-290 (PKWAMNMAILLSHASSVVNPIVYA) traverse the membrane as a helical segment. The adenosine site is built by S278 and H279. Topologically, residues 291-332 (YRNRDFRYTFHKIISRYVLCQTDVLKSGNGQAGTQSALDVGL) are cytoplasmic. C310 carries S-palmitoyl cysteine lipidation.

It belongs to the G-protein coupled receptor 1 family.

The protein resides in the cell membrane. In terms of biological role, receptor for adenosine. The activity of this receptor is mediated by G proteins which activate adenylyl cyclase. In Canis lupus familiaris (Dog), this protein is Adenosine receptor A2b (ADORA2B).